Here is a 1158-residue protein sequence, read N- to C-terminus: Adipocyte enhancer-binding protein 1 (1158 aa).

The N-terminal stretch at 1–25 (MAAVRGAPLLSCLLALLALCPGGRP) is a signal peptide. A disordered region spans residues 41 to 387 (FLSELEPEPR…TPTEKVKCPP (347 aa)). Over residues 45–55 (LEPEPREDDVE) the composition is skewed to acidic residues. Residues 100-110 (DKGPKVPKESL) are compositionally biased toward basic and acidic residues. Over residues 116–166 (PPKKGKEKPPKATKKPKEKPPKATKKPKEKPPKATKKPKEKPPKATKKPPS) the composition is skewed to basic residues. A compositionally biased stretch (pro residues) spans 182–192 (PLPPPPSPGPE). Low complexity predominate over residues 193–202 (ELPQEGGAPL). Positions 211–223 (EETHVEAREHQPE) are enriched in basic and acidic residues. A compositionally biased stretch (basic residues) spans 252–266 (RQKQPRPPPSRRRRP). The span at 267 to 289 (ERVWPEPPEEKAPAPAPEERIEP) shows a compositional bias: basic and acidic residues. The span at 290-300 (PVKPLLPPLPP) shows a compositional bias: pro residues. Basic and acidic residues predominate over residues 326–371 (PDAERQTDEEKEELKKPKKEDSSPKEETDKWAVEKGKDHKEPRKGE). The F5/8 type C domain occupies 383 to 540 (VKCPPIGMES…LCMRLEVLGC (158 aa)). Residues 390–555 (MESHRIEDNQ…YSYYAQNEVV (166 aa)) are required for DNA-binding and interaction with NFKBIA. Positions 421–624 (TGATEDDYYD…EPEFRYTAGI (204 aa)) are interaction with MAPK1 and MAPK3. N-linked (GlcNAc...) asparagine glycosylation occurs at asparagine 528. The segment at 555–985 (VATDDLDFRH…TQCNFILARS (431 aa)) is interaction with PTEN. The Peptidase M14 domain maps to 563 to 904 (RHHSYKDMRQ…EALLTFMEQV (342 aa)). The N-linked (GlcNAc...) asparagine glycan is linked to asparagine 922. The segment at 941 to 1158 (DYWRILNPGE…ETYTVNFGDF (218 aa)) is required for transcriptional repression. An interaction with MAPK1 and MAPK3 region spans residues 1006–1158 (DPSRPMTPQQ…ETYTVNFGDF (153 aa)). The span at 1108-1137 (EFETQLEPEFETQLEPEFEEEEEEEKEEEI) shows a compositional bias: acidic residues. The disordered stretch occupies residues 1108-1141 (EFETQLEPEFETQLEPEFEEEEEEEKEEEIATGQ).

Belongs to the peptidase M14 family. In terms of assembly, isoform 1: Interacts with different types of collagen, including collagens I, III, and V. Isoform 2: Interacts with GNG5, NFKBIA, MAPK1, MAPK3 and PTEN. Interaction with MAPK1 may stimulate DNA-binding. May interact with calmodulin. Binds to DNA in vitro. Post-translationally, phosphorylated by MAPK1 in vitro. Expressed in osteoblast and visceral fat.

Its subcellular location is the secreted. The protein resides in the cytoplasm. It is found in the nucleus. Its function is as follows. As a positive regulator of collagen fibrillogenesis, it is probably involved in the organization and remodeling of the extracellular matrix. May positively regulate MAP-kinase activity in adipocytes, leading to enhanced adipocyte proliferation and reduced adipocyte differentiation. May also positively regulate NF-kappa-B activity in macrophages by promoting the phosphorylation and subsequent degradation of I-kappa-B-alpha (NFKBIA), leading to enhanced macrophage inflammatory responsiveness. Can act as a transcriptional repressor. In Homo sapiens (Human), this protein is Adipocyte enhancer-binding protein 1 (AEBP1).